The sequence spans 502 residues: Probable cytosol aminopeptidase (502 aa).

Positions 269 and 274 each coordinate Mn(2+). Lys281 is a catalytic residue. Mn(2+) contacts are provided by Asp292, Asp351, and Glu353. Residue Arg355 is part of the active site.

The protein belongs to the peptidase M17 family. Mn(2+) is required as a cofactor.

It is found in the cytoplasm. It catalyses the reaction Release of an N-terminal amino acid, Xaa-|-Yaa-, in which Xaa is preferably Leu, but may be other amino acids including Pro although not Arg or Lys, and Yaa may be Pro. Amino acid amides and methyl esters are also readily hydrolyzed, but rates on arylamides are exceedingly low.. The catalysed reaction is Release of an N-terminal amino acid, preferentially leucine, but not glutamic or aspartic acids.. Functionally, presumably involved in the processing and regular turnover of intracellular proteins. Catalyzes the removal of unsubstituted N-terminal amino acids from various peptides. The sequence is that of Probable cytosol aminopeptidase from Shewanella sediminis (strain HAW-EB3).